The primary structure comprises 271 residues: ATP synthase subunit a (271 aa).

5 consecutive transmembrane segments (helical) span residues 38–58 (FWTLNIDSMFFSVVLGLLFLV), 100–120 (LIAPLALTIFVWVFLMNLMDL), 146–166 (DVNITLSMALGVFILILFYSI), 220–240 (LIFILIAGLLPWWSQWILNVP), and 242–262 (AIFHILIITLQAFIFMVLTIV).

This sequence belongs to the ATPase A chain family. In terms of assembly, F-type ATPases have 2 components, CF(1) - the catalytic core - and CF(0) - the membrane proton channel. CF(1) has five subunits: alpha(3), beta(3), gamma(1), delta(1), epsilon(1). CF(0) has three main subunits: a(1), b(2) and c(9-12). The alpha and beta chains form an alternating ring which encloses part of the gamma chain. CF(1) is attached to CF(0) by a central stalk formed by the gamma and epsilon chains, while a peripheral stalk is formed by the delta and b chains.

The protein resides in the cell inner membrane. Its function is as follows. Key component of the proton channel; it plays a direct role in the translocation of protons across the membrane. This is ATP synthase subunit a from Salmonella arizonae (strain ATCC BAA-731 / CDC346-86 / RSK2980).